The sequence spans 215 residues: Large ribosomal subunit protein uL4 (215 aa).

The tract at residues 46 to 76 (TAKSKNRAEVSGGGRKPWAQKGGGRARAGSI) is disordered. The span at 56 to 71 (SGGGRKPWAQKGGGRA) shows a compositional bias: gly residues.

The protein belongs to the universal ribosomal protein uL4 family. Part of the 50S ribosomal subunit.

Functionally, one of the primary rRNA binding proteins, this protein initially binds near the 5'-end of the 23S rRNA. It is important during the early stages of 50S assembly. It makes multiple contacts with different domains of the 23S rRNA in the assembled 50S subunit and ribosome. In terms of biological role, forms part of the polypeptide exit tunnel. In Helicobacter pylori (strain HPAG1), this protein is Large ribosomal subunit protein uL4.